Reading from the N-terminus, the 346-residue chain is Phosphoribosylformylglycinamidine cyclo-ligase (346 aa).

This sequence belongs to the AIR synthase family.

It is found in the cytoplasm. The enzyme catalyses 2-formamido-N(1)-(5-O-phospho-beta-D-ribosyl)acetamidine + ATP = 5-amino-1-(5-phospho-beta-D-ribosyl)imidazole + ADP + phosphate + H(+). The protein operates within purine metabolism; IMP biosynthesis via de novo pathway; 5-amino-1-(5-phospho-D-ribosyl)imidazole from N(2)-formyl-N(1)-(5-phospho-D-ribosyl)glycinamide: step 2/2. The sequence is that of Phosphoribosylformylglycinamidine cyclo-ligase from Bacillus cereus (strain ZK / E33L).